Consider the following 223-residue polypeptide: Phosphoribosylformylglycinamidine synthase subunit PurQ (223 aa).

In terms of domain architecture, Glutamine amidotransferase type-1 spans 2 to 223 (KVAIIRFPGT…LLENFINFNF (222 aa)). Residue cysteine 84 is the Nucleophile of the active site. Catalysis depends on residues histidine 192 and glutamate 194.

Part of the FGAM synthase complex composed of 1 PurL, 1 PurQ and 2 PurS subunits.

It is found in the cytoplasm. It carries out the reaction N(2)-formyl-N(1)-(5-phospho-beta-D-ribosyl)glycinamide + L-glutamine + ATP + H2O = 2-formamido-N(1)-(5-O-phospho-beta-D-ribosyl)acetamidine + L-glutamate + ADP + phosphate + H(+). The catalysed reaction is L-glutamine + H2O = L-glutamate + NH4(+). The protein operates within purine metabolism; IMP biosynthesis via de novo pathway; 5-amino-1-(5-phospho-D-ribosyl)imidazole from N(2)-formyl-N(1)-(5-phospho-D-ribosyl)glycinamide: step 1/2. In terms of biological role, part of the phosphoribosylformylglycinamidine synthase complex involved in the purines biosynthetic pathway. Catalyzes the ATP-dependent conversion of formylglycinamide ribonucleotide (FGAR) and glutamine to yield formylglycinamidine ribonucleotide (FGAM) and glutamate. The FGAM synthase complex is composed of three subunits. PurQ produces an ammonia molecule by converting glutamine to glutamate. PurL transfers the ammonia molecule to FGAR to form FGAM in an ATP-dependent manner. PurS interacts with PurQ and PurL and is thought to assist in the transfer of the ammonia molecule from PurQ to PurL. The protein is Phosphoribosylformylglycinamidine synthase subunit PurQ of Campylobacter jejuni subsp. jejuni serotype O:2 (strain ATCC 700819 / NCTC 11168).